Here is a 559-residue protein sequence, read N- to C-terminus: Probable inorganic carbon transporter subunit DabB1 (559 aa).

The next 13 membrane-spanning stretches (helical) occupy residues 4–24 (LQWL…LFAA), 33–53 (LSVA…VAYI), 76–96 (LSSI…VYSI), 106–126 (PRFF…VAAG), 173–193 (LVLA…PTLF), 202–222 (ATIM…LSAF), 240–260 (GPTP…GFII), 273–293 (VLHM…VLML), 310–330 (MGFM…FHLI), 375–395 (LPWL…LVIA), 408–428 (GAIV…FATH), 440–460 (MMIL…GHAF), and 487–507 (GLVF…YLAS).

This sequence belongs to the inorganic carbon transporter (TC 9.A.2) DabB family. In terms of assembly, forms a complex with DabA1.

The protein resides in the cell inner membrane. Part of an energy-coupled inorganic carbon pump. The sequence is that of Probable inorganic carbon transporter subunit DabB1 from Halothiobacillus neapolitanus (strain ATCC 23641 / c2) (Thiobacillus neapolitanus).